The sequence spans 363 residues: Tetraacyldisaccharide 4'-kinase (363 aa).

Residue 78-85 (TVGGNGKT) coordinates ATP.

Belongs to the LpxK family.

The catalysed reaction is a lipid A disaccharide + ATP = a lipid IVA + ADP + H(+). It functions in the pathway glycolipid biosynthesis; lipid IV(A) biosynthesis; lipid IV(A) from (3R)-3-hydroxytetradecanoyl-[acyl-carrier-protein] and UDP-N-acetyl-alpha-D-glucosamine: step 6/6. Functionally, transfers the gamma-phosphate of ATP to the 4'-position of a tetraacyldisaccharide 1-phosphate intermediate (termed DS-1-P) to form tetraacyldisaccharide 1,4'-bis-phosphate (lipid IVA). This chain is Tetraacyldisaccharide 4'-kinase, found in Wigglesworthia glossinidia brevipalpis.